Consider the following 207-residue polypeptide: Large ribosomal subunit protein uL4 (207 aa).

Positions 49 to 79 (HKVKSRGEVSGGGKKPWRQKGTGRARAGTSR) are disordered.

It belongs to the universal ribosomal protein uL4 family. In terms of assembly, part of the 50S ribosomal subunit.

One of the primary rRNA binding proteins, this protein initially binds near the 5'-end of the 23S rRNA. It is important during the early stages of 50S assembly. It makes multiple contacts with different domains of the 23S rRNA in the assembled 50S subunit and ribosome. Functionally, forms part of the polypeptide exit tunnel. The chain is Large ribosomal subunit protein uL4 from Heliobacterium modesticaldum (strain ATCC 51547 / Ice1).